We begin with the raw amino-acid sequence, 434 residues long: 3-phosphoshikimate 1-carboxyvinyltransferase (434 aa).

Residues K22, S23, and R27 each coordinate 3-phosphoshikimate. Position 22 (K22) interacts with phosphoenolpyruvate. 2 residues coordinate phosphoenolpyruvate: G93 and R121. 3-phosphoshikimate-binding residues include S168, S169, Q170, S199, D320, and K347. Residue Q170 coordinates phosphoenolpyruvate. The active-site Proton acceptor is D320. Phosphoenolpyruvate contacts are provided by R351, R395, and K420.

It belongs to the EPSP synthase family. As to quaternary structure, monomer.

It localises to the cytoplasm. The catalysed reaction is 3-phosphoshikimate + phosphoenolpyruvate = 5-O-(1-carboxyvinyl)-3-phosphoshikimate + phosphate. Its pathway is metabolic intermediate biosynthesis; chorismate biosynthesis; chorismate from D-erythrose 4-phosphate and phosphoenolpyruvate: step 6/7. Functionally, catalyzes the transfer of the enolpyruvyl moiety of phosphoenolpyruvate (PEP) to the 5-hydroxyl of shikimate-3-phosphate (S3P) to produce enolpyruvyl shikimate-3-phosphate and inorganic phosphate. The chain is 3-phosphoshikimate 1-carboxyvinyltransferase from Cupriavidus taiwanensis (strain DSM 17343 / BCRC 17206 / CCUG 44338 / CIP 107171 / LMG 19424 / R1) (Ralstonia taiwanensis (strain LMG 19424)).